A 131-amino-acid polypeptide reads, in one-letter code: Large ribosomal subunit protein bL17 (131 aa).

It belongs to the bacterial ribosomal protein bL17 family. Part of the 50S ribosomal subunit. Contacts protein L32.

The sequence is that of Large ribosomal subunit protein bL17 from Bordetella avium (strain 197N).